A 62-amino-acid polypeptide reads, in one-letter code: Large ribosomal subunit protein bL33 (62 aa).

It belongs to the bacterial ribosomal protein bL33 family.

This Azobacteroides pseudotrichonymphae genomovar. CFP2 protein is Large ribosomal subunit protein bL33.